Reading from the N-terminus, the 183-residue chain is Putative ribosomal N-acetyltransferase YdaF (183 aa).

Residues 10 to 176 (ITIRLLEPKD…HDLVYYSLLK (167 aa)) enclose the N-acetyltransferase domain.

This sequence belongs to the acetyltransferase family. As to quaternary structure, homohexamer, and homodimer.

In terms of biological role, putative N-acetyltransferase. May act on ribosomal proteins (Potential). This chain is Putative ribosomal N-acetyltransferase YdaF (ydaF), found in Bacillus subtilis (strain 168).